Here is a 30-residue protein sequence, read N- to C-terminus: Antibacterial 6.5 kDa protein (30 aa).

The segment covering 1–21 (XXVPYPRPFPRPPIGPRPLPF) has biased composition (pro residues). The segment at 1–30 (XXVPYPRPFPRPPIGPRPLPFPGGGRPFQS) is disordered.

To bovine bactenecin 7.

Its function is as follows. Strong antimicrobial activity against P.immobilis and M.luteus, less active against E.coli D22. This Carcinus maenas (Common shore crab) protein is Antibacterial 6.5 kDa protein.